We begin with the raw amino-acid sequence, 402 residues long: CinA-like protein (402 aa).

The protein belongs to the CinA family.

This Escherichia coli O17:K52:H18 (strain UMN026 / ExPEC) protein is CinA-like protein.